Consider the following 356-residue polypeptide: Peptide chain release factor 1 (356 aa).

N5-methylglutamine is present on Gln235.

It belongs to the prokaryotic/mitochondrial release factor family. Methylated by PrmC. Methylation increases the termination efficiency of RF1.

It localises to the cytoplasm. Functionally, peptide chain release factor 1 directs the termination of translation in response to the peptide chain termination codons UAG and UAA. The sequence is that of Peptide chain release factor 1 from Mycobacteroides abscessus (strain ATCC 19977 / DSM 44196 / CCUG 20993 / CIP 104536 / JCM 13569 / NCTC 13031 / TMC 1543 / L948) (Mycobacterium abscessus).